The sequence spans 161 residues: Phosphopantetheine adenylyltransferase (161 aa).

Ser8 is a substrate binding site. ATP is bound by residues 8 to 9 (SF) and His16. The substrate site is built by Lys40, Leu72, and Arg86. ATP is bound by residues 87–89 (GLR), Glu97, and 122–128 (FSFVSSS).

The protein belongs to the bacterial CoaD family. Homohexamer. It depends on Mg(2+) as a cofactor.

The protein resides in the cytoplasm. It catalyses the reaction (R)-4'-phosphopantetheine + ATP + H(+) = 3'-dephospho-CoA + diphosphate. The protein operates within cofactor biosynthesis; coenzyme A biosynthesis; CoA from (R)-pantothenate: step 4/5. In terms of biological role, reversibly transfers an adenylyl group from ATP to 4'-phosphopantetheine, yielding dephospho-CoA (dPCoA) and pyrophosphate. The polypeptide is Phosphopantetheine adenylyltransferase (Thermotoga neapolitana (strain ATCC 49049 / DSM 4359 / NBRC 107923 / NS-E)).